The sequence spans 597 residues: Elongation factor 4 (597 aa).

The tr-type G domain occupies 2-184 (DHIRNFSIIA…SLIAKVPPPK (183 aa)). GTP contacts are provided by residues 14 to 19 (DHGKST) and 131 to 134 (NKID).

This sequence belongs to the TRAFAC class translation factor GTPase superfamily. Classic translation factor GTPase family. LepA subfamily.

The protein resides in the cell inner membrane. The catalysed reaction is GTP + H2O = GDP + phosphate + H(+). Its function is as follows. Required for accurate and efficient protein synthesis under certain stress conditions. May act as a fidelity factor of the translation reaction, by catalyzing a one-codon backward translocation of tRNAs on improperly translocated ribosomes. Back-translocation proceeds from a post-translocation (POST) complex to a pre-translocation (PRE) complex, thus giving elongation factor G a second chance to translocate the tRNAs correctly. Binds to ribosomes in a GTP-dependent manner. This is Elongation factor 4 from Burkholderia cenocepacia (strain HI2424).